A 385-amino-acid chain; its full sequence is Galactokinase (385 aa).

Residue 34–37 coordinates substrate; the sequence is EHTD. 124–130 serves as a coordination point for ATP; the sequence is SSGLSSS. Residues Ser-130 and Glu-162 each contribute to the Mg(2+) site. Catalysis depends on Asp-174, which acts as the Proton acceptor. Residue Tyr-223 participates in substrate binding.

This sequence belongs to the GHMP kinase family. GalK subfamily.

It localises to the cytoplasm. It catalyses the reaction alpha-D-galactose + ATP = alpha-D-galactose 1-phosphate + ADP + H(+). It participates in carbohydrate metabolism; galactose metabolism. Functionally, catalyzes the transfer of the gamma-phosphate of ATP to D-galactose to form alpha-D-galactose-1-phosphate (Gal-1-P). This is Galactokinase from Actinobacillus succinogenes (strain ATCC 55618 / DSM 22257 / CCUG 43843 / 130Z).